Reading from the N-terminus, the 344-residue chain is Cyclin-G2 (344 aa).

A compositionally biased stretch (acidic residues) spans 301-313; sequence ESESEDSCEDMSC. The interval 301-320 is disordered; sequence ESESEDSCEDMSCGEESLSS.

This sequence belongs to the cyclin family. Cyclin G subfamily. High levels in cerebellum, thymus, spleen and prostate. Low levels in skeletal muscle.

It is found in the cytoplasm. In terms of biological role, may play a role in growth regulation and in negative regulation of cell cycle progression. This is Cyclin-G2 (CCNG2) from Homo sapiens (Human).